The primary structure comprises 336 residues: D-erythrose-4-phosphate dehydrogenase (336 aa).

NAD(+) is bound at residue 11-12 (RI). Substrate-binding positions include 153–155 (SCT), R199, 212–213 (TK), and R235. The active-site Nucleophile is C154. Residue N317 coordinates NAD(+).

The protein belongs to the glyceraldehyde-3-phosphate dehydrogenase family. Epd subfamily. In terms of assembly, homotetramer.

It is found in the cytoplasm. The catalysed reaction is D-erythrose 4-phosphate + NAD(+) + H2O = 4-phospho-D-erythronate + NADH + 2 H(+). The protein operates within cofactor biosynthesis; pyridoxine 5'-phosphate biosynthesis; pyridoxine 5'-phosphate from D-erythrose 4-phosphate: step 1/5. Catalyzes the NAD-dependent conversion of D-erythrose 4-phosphate to 4-phosphoerythronate. This chain is D-erythrose-4-phosphate dehydrogenase, found in Aeromonas salmonicida (strain A449).